Consider the following 82-residue polypeptide: UPF0248 protein Mevan_1298 (82 aa).

The protein belongs to the UPF0248 family.

The protein is UPF0248 protein Mevan_1298 of Methanococcus vannielii (strain ATCC 35089 / DSM 1224 / JCM 13029 / OCM 148 / SB).